Consider the following 415-residue polypeptide: uncharacterized protein (415 aa).

Positions 66, 72, 75, and 149 each coordinate [4Fe-4S] cluster. S-adenosyl-L-methionine-binding residues include Gln249, Phe276, Glu296, and Asp344. The active-site Nucleophile is Cys370.

This sequence belongs to the class I-like SAM-binding methyltransferase superfamily. RNA M5U methyltransferase family.

This is an uncharacterized protein from Brucella melitensis biotype 1 (strain ATCC 23456 / CCUG 17765 / NCTC 10094 / 16M).